Here is a 422-residue protein sequence, read N- to C-terminus: Ribosomal RNA small subunit methyltransferase B (422 aa).

S-adenosyl-L-methionine is bound by residues 254–260 (CAAPGGK), D277, D303, and D322. C375 (nucleophile) is an active-site residue.

Belongs to the class I-like SAM-binding methyltransferase superfamily. RsmB/NOP family.

It is found in the cytoplasm. It catalyses the reaction cytidine(967) in 16S rRNA + S-adenosyl-L-methionine = 5-methylcytidine(967) in 16S rRNA + S-adenosyl-L-homocysteine + H(+). Its function is as follows. Specifically methylates the cytosine at position 967 (m5C967) of 16S rRNA. In Proteus mirabilis (strain HI4320), this protein is Ribosomal RNA small subunit methyltransferase B.